Consider the following 94-residue polypeptide: Protein P19 (94 aa).

Its function is as follows. Binds to single-stranded DNA (ssDNA). In Acinetobacter calcoaceticus (Arthrobacter siderocapsulatus), this protein is Protein P19 (XIX).